A 736-amino-acid chain; its full sequence is Na(+)/H(+) antiporter NhaA (736 aa).

Residues 1 to 387 (MNHSPQSARP…ICGYLLLRAA (387 aa)) are na(+)/H(+) antiporter NhaA. The next 12 helical transmembrane spans lie at 23-43 (AGGI…NSPF), 58-78 (LSLA…LVGL), 96-116 (MLPG…FAVL), 126-146 (GWAV…SLLG), 155-175 (VFLA…IAIF), 178-198 (AEIS…LFVM), 201-221 (MGVV…FFVF), 224-244 (GVHA…KPAP), 265-285 (VAFI…FKGL), 298-318 (ILLG…WLAI), 334-354 (LYGV…IGLL), and 367-387 (IGVL…LRAA). The peptidase S49 stretch occupies residues 388-736 (RPDQSAANPL…EKAIWARYGL (349 aa)).

The protein in the N-terminal section; belongs to the NhaA Na(+)/H(+) (TC 2.A.33) antiporter family. In the C-terminal section; belongs to the peptidase S49 family.

The protein resides in the cell inner membrane. It carries out the reaction Na(+)(in) + 2 H(+)(out) = Na(+)(out) + 2 H(+)(in). In terms of biological role, na(+)/H(+) antiporter that extrudes sodium in exchange for external protons. The protein is Na(+)/H(+) antiporter NhaA of Brucella abortus (strain 2308).